The primary structure comprises 411 residues: 2,3-bisphosphoglycerate-independent phosphoglycerate mutase (411 aa).

This sequence belongs to the BPG-independent phosphoglycerate mutase family. A-PGAM subfamily.

The catalysed reaction is (2R)-2-phosphoglycerate = (2R)-3-phosphoglycerate. It functions in the pathway carbohydrate degradation; glycolysis; pyruvate from D-glyceraldehyde 3-phosphate: step 3/5. Its function is as follows. Catalyzes the interconversion of 2-phosphoglycerate and 3-phosphoglycerate. This is 2,3-bisphosphoglycerate-independent phosphoglycerate mutase from Pyrobaculum calidifontis (strain DSM 21063 / JCM 11548 / VA1).